Consider the following 107-residue polypeptide: Large ribosomal subunit protein bL21 (107 aa).

Belongs to the bacterial ribosomal protein bL21 family. As to quaternary structure, part of the 50S ribosomal subunit. Contacts protein L20.

Functionally, this protein binds to 23S rRNA in the presence of protein L20. This chain is Large ribosomal subunit protein bL21, found in Chlamydia trachomatis serovar L2 (strain ATCC VR-902B / DSM 19102 / 434/Bu).